Consider the following 1070-residue polypeptide: DNA-directed RNA polymerase subunit beta (1070 aa).

This sequence belongs to the RNA polymerase beta chain family. In terms of assembly, in plastids the minimal PEP RNA polymerase catalytic core is composed of four subunits: alpha, beta, beta', and beta''. When a (nuclear-encoded) sigma factor is associated with the core the holoenzyme is formed, which can initiate transcription.

The protein localises to the plastid. It is found in the chloroplast. The catalysed reaction is RNA(n) + a ribonucleoside 5'-triphosphate = RNA(n+1) + diphosphate. DNA-dependent RNA polymerase catalyzes the transcription of DNA into RNA using the four ribonucleoside triphosphates as substrates. This chain is DNA-directed RNA polymerase subunit beta, found in Morus indica (Mulberry).